Reading from the N-terminus, the 206-residue chain is Small ribosomal subunit protein uS4 (206 aa).

One can recognise an S4 RNA-binding domain in the interval 94–157; it reads RRLDNVVYRL…RSRTYFKNLV (64 aa).

Belongs to the universal ribosomal protein uS4 family. Part of the 30S ribosomal subunit. Contacts protein S5. The interaction surface between S4 and S5 is involved in control of translational fidelity.

In terms of biological role, one of the primary rRNA binding proteins, it binds directly to 16S rRNA where it nucleates assembly of the body of the 30S subunit. Its function is as follows. With S5 and S12 plays an important role in translational accuracy. This is Small ribosomal subunit protein uS4 from Chloroflexus aurantiacus (strain ATCC 29364 / DSM 637 / Y-400-fl).